The following is a 240-amino-acid chain: Probable transcriptional regulator ycf27 (240 aa).

Residues K5–L118 form the Response regulatory domain. At D54 the chain carries 4-aspartylphosphate. Residues D74 to G92 constitute a DNA-binding region (H-T-H motif). A DNA-binding region (ompR/PhoB-type) is located at residues S133–R234.

The protein localises to the plastid. It localises to the chloroplast. In terms of biological role, probable promoter-specific protein mediating the interaction between DNA and RNA polymerase. The polypeptide is Probable transcriptional regulator ycf27 (ycf27) (Porphyridium aerugineum (Red microalga)).